The primary structure comprises 394 residues: Argininosuccinate synthase (394 aa).

8–16 (AYSGGLDTS) is a binding site for ATP. Residues tyrosine 86 and serine 91 each coordinate L-citrulline. ATP is bound at residue glycine 116. 3 residues coordinate L-aspartate: threonine 118, asparagine 122, and aspartate 123. Residue asparagine 122 coordinates L-citrulline. L-citrulline is bound by residues arginine 126, serine 172, serine 181, glutamate 257, and tyrosine 269.

Belongs to the argininosuccinate synthase family. Type 1 subfamily. In terms of assembly, homotetramer.

It localises to the cytoplasm. It catalyses the reaction L-citrulline + L-aspartate + ATP = 2-(N(omega)-L-arginino)succinate + AMP + diphosphate + H(+). Its pathway is amino-acid biosynthesis; L-arginine biosynthesis; L-arginine from L-ornithine and carbamoyl phosphate: step 2/3. In Methanosarcina acetivorans (strain ATCC 35395 / DSM 2834 / JCM 12185 / C2A), this protein is Argininosuccinate synthase.